The chain runs to 89 residues: Albumin-1 (89 aa).

Residue A1 is a signal peptide. Cystine bridges form between C4–C21, C8–C23, and C16–C33. Positions 39–46 (LSSVAKMI) are excised as a propeptide.

The C-terminal glycine may be removed from A1b.

Functionally, A1b binds to basic 7S globulin (BG) and stimulates its phosphorylation activity. This Vigna radiata var. radiata (Mung bean) protein is Albumin-1 (LEG).